We begin with the raw amino-acid sequence, 223 residues long: Ribose-5-phosphate isomerase A (223 aa).

Substrate contacts are provided by residues 32–35, 85–88, and 98–101; these read TGST, DGAD, and KGGG. Residue Glu-107 is the Proton acceptor of the active site. Residue Lys-125 coordinates substrate.

The protein belongs to the ribose 5-phosphate isomerase family. As to quaternary structure, homodimer.

The enzyme catalyses aldehydo-D-ribose 5-phosphate = D-ribulose 5-phosphate. The protein operates within carbohydrate degradation; pentose phosphate pathway; D-ribose 5-phosphate from D-ribulose 5-phosphate (non-oxidative stage): step 1/1. In terms of biological role, catalyzes the reversible conversion of ribose-5-phosphate to ribulose 5-phosphate. This is Ribose-5-phosphate isomerase A from Stutzerimonas stutzeri (strain A1501) (Pseudomonas stutzeri).